We begin with the raw amino-acid sequence, 115 residues long: NADH-ubiquinone oxidoreductase chain 3 (115 aa).

A run of 3 helical transmembrane segments spans residues 4 to 24, 55 to 75, and 87 to 107; these read FIVL…AFWL, FFLV…LLPL, and TMLT…YEWL.

It belongs to the complex I subunit 3 family. In terms of assembly, core subunit of respiratory chain NADH dehydrogenase (Complex I) which is composed of 45 different subunits. Interacts with TMEM186. Interacts with TMEM242.

Its subcellular location is the mitochondrion inner membrane. It catalyses the reaction a ubiquinone + NADH + 5 H(+)(in) = a ubiquinol + NAD(+) + 4 H(+)(out). In terms of biological role, core subunit of the mitochondrial membrane respiratory chain NADH dehydrogenase (Complex I) which catalyzes electron transfer from NADH through the respiratory chain, using ubiquinone as an electron acceptor. Essential for the catalytic activity of complex I. The protein is NADH-ubiquinone oxidoreductase chain 3 of Reithrodontomys megalotis (Western harvest mouse).